The chain runs to 429 residues: E3 ubiquitin-protein ligase ZNRF4 (429 aa).

The first 27 residues, 1 to 27 (MLRCRPEPLMPRATRVAVAVSLPLSHA), serve as a signal peptide directing secretion. The Lumenal segment spans residues 28–250 (VIPTQLPSHP…PPCRDLDCHP (223 aa)). Residues 30–64 (PTQLPSHPGHRPSGRPRRCPKAPCLPSPVGLSSTQ) are disordered. Residues 37–49 (PGHRPSGRPRRCP) are compositionally biased toward basic residues. N152 carries N-linked (GlcNAc...) asparagine glycosylation. The 72-residue stretch at 152–223 (NRSLGAIALI…VGEAASQDLR (72 aa)) folds into the PA domain. Residues 251-271 (VLTVSWALGRTLALVVSTLFV) form a helical membrane-spanning segment. At 272–429 (LNRLWLWAQA…SPAPPEAPGQ (158 aa)) the chain is on the cytoplasmic side. The RING-type; atypical zinc-finger motif lies at 309 to 352 (CAICLDEYEEGDQLKILPCSHTYHCKCIDPWFSQAPRRSCPVCK). Disordered regions lie at residues 358-381 (TEDSFDSTTDSFSDEDPSLPGHRP) and 409-429 (TTSLEAEDTTVSPAPPEAPGQ). A compositionally biased stretch (polar residues) spans 409–420 (TTSLEAEDTTVS).

In terms of assembly, interacts with CANX.

The protein resides in the endoplasmic reticulum membrane. It catalyses the reaction S-ubiquitinyl-[E2 ubiquitin-conjugating enzyme]-L-cysteine + [acceptor protein]-L-lysine = [E2 ubiquitin-conjugating enzyme]-L-cysteine + N(6)-ubiquitinyl-[acceptor protein]-L-lysine.. It functions in the pathway protein modification; protein ubiquitination. Its function is as follows. E3 ubiquitin-protein ligase that acts as a negative regulator of NOD2 signaling by mediating ubiquitination and degradation of RIPK2. Also catalyzes ubiquitination and proteasomal degradation of CANX within the endoplasmic reticulum. Could have a role in spermatogenesis. The protein is E3 ubiquitin-protein ligase ZNRF4 (ZNRF4) of Macaca fascicularis (Crab-eating macaque).